Here is a 536-residue protein sequence, read N- to C-terminus: CTP synthase (536 aa).

The tract at residues 1–268 (MSTKYVFVTG…DNLVCEKLHL (268 aa)) is amidoligase domain. Serine 14 provides a ligand contact to CTP. UTP is bound at residue serine 14. Position 15-20 (15-20 (ALGKGI)) interacts with ATP. Tyrosine 55 provides a ligand contact to L-glutamine. Aspartate 72 provides a ligand contact to ATP. Positions 72 and 142 each coordinate Mg(2+). Residues 149 to 151 (DIE), 189 to 194 (KTKPTQ), and lysine 225 each bind CTP. UTP is bound by residues 189–194 (KTKPTQ) and lysine 225. The Glutamine amidotransferase type-1 domain maps to 293–535 (KIALVGKYVE…IKAALEENKS (243 aa)). Glycine 355 serves as a coordination point for L-glutamine. The active-site Nucleophile; for glutamine hydrolysis is cysteine 382. Residues 383–386 (LGMQ), glutamate 406, and arginine 463 contribute to the L-glutamine site. Catalysis depends on residues histidine 508 and glutamate 510.

This sequence belongs to the CTP synthase family. Homotetramer.

It carries out the reaction UTP + L-glutamine + ATP + H2O = CTP + L-glutamate + ADP + phosphate + 2 H(+). The catalysed reaction is L-glutamine + H2O = L-glutamate + NH4(+). It catalyses the reaction UTP + NH4(+) + ATP = CTP + ADP + phosphate + 2 H(+). It participates in pyrimidine metabolism; CTP biosynthesis via de novo pathway; CTP from UDP: step 2/2. Its activity is regulated as follows. Allosterically activated by GTP, when glutamine is the substrate; GTP has no effect on the reaction when ammonia is the substrate. The allosteric effector GTP functions by stabilizing the protein conformation that binds the tetrahedral intermediate(s) formed during glutamine hydrolysis. Inhibited by the product CTP, via allosteric rather than competitive inhibition. In terms of biological role, catalyzes the ATP-dependent amination of UTP to CTP with either L-glutamine or ammonia as the source of nitrogen. Regulates intracellular CTP levels through interactions with the four ribonucleotide triphosphates. This chain is CTP synthase, found in Clostridium beijerinckii (strain ATCC 51743 / NCIMB 8052) (Clostridium acetobutylicum).